Here is a 354-residue protein sequence, read N- to C-terminus: Trans-3-hydroxy-L-proline dehydratase (354 aa).

The Proton acceptor role is filled by C104. Residues 105-106, D269, and 274-275 each bind substrate; these read GH and GS.

Belongs to the proline racemase family. In terms of assembly, homodimer. As to expression, ubiquitously expressed.

The catalysed reaction is trans-3-hydroxy-L-proline = 1-pyrroline-2-carboxylate + H2O. In terms of biological role, catalyzes the dehydration of trans-3-hydroxy-L-proline to Delta(1)-pyrroline-2-carboxylate (Pyr2C). May be required to degrade trans-3-hydroxy-L-proline from the diet and originating from the degradation of proteins such as collagen-IV that contain it. In Homo sapiens (Human), this protein is Trans-3-hydroxy-L-proline dehydratase (L3HYPDH).